The sequence spans 172 residues: NAD(P)H-quinone oxidoreductase subunit I, chloroplastic (172 aa).

4Fe-4S ferredoxin-type domains lie at 55–84 and 95–124; these read GRIHFEFDKCIACEVCVRVCPIDLPVVDWK and LNYSIDFGICIFCGNCVEYCPTNCLSMTEE. Residues cysteine 64, cysteine 67, cysteine 70, cysteine 74, cysteine 104, cysteine 107, cysteine 110, and cysteine 114 each coordinate [4Fe-4S] cluster.

This sequence belongs to the complex I 23 kDa subunit family. In terms of assembly, NDH is composed of at least 16 different subunits, 5 of which are encoded in the nucleus. [4Fe-4S] cluster serves as cofactor.

Its subcellular location is the plastid. The protein resides in the chloroplast thylakoid membrane. It catalyses the reaction a plastoquinone + NADH + (n+1) H(+)(in) = a plastoquinol + NAD(+) + n H(+)(out). The catalysed reaction is a plastoquinone + NADPH + (n+1) H(+)(in) = a plastoquinol + NADP(+) + n H(+)(out). Its function is as follows. NDH shuttles electrons from NAD(P)H:plastoquinone, via FMN and iron-sulfur (Fe-S) centers, to quinones in the photosynthetic chain and possibly in a chloroplast respiratory chain. The immediate electron acceptor for the enzyme in this species is believed to be plastoquinone. Couples the redox reaction to proton translocation, and thus conserves the redox energy in a proton gradient. This is NAD(P)H-quinone oxidoreductase subunit I, chloroplastic from Olimarabidopsis pumila (Dwarf rocket).